A 312-amino-acid polypeptide reads, in one-letter code: MAGITAALVKELRDKTGVGMMDCKKALGETDGDFEAAVDWLRKKGLSKAAKKADRVAAEGLVAVATQGGQGAVVEVNSETDFVARNEKFQTAVKEIAALAIGGSGDVAEIKAASTSGGSTVEDHLTNLIATIGENMALRRAAVVVAEPGVVASYVHNPAATDMGAIGVLVGLQSDGDKDKLAELGRKIAMHVAAGSPAVAVSVDVDGVDSAIADKEREVFADQARQAGKPDSIVEKMVEGRMRKFYEEVVLLKQAFVMDPDNTIEQVLEAAAKDLGAPVTISGFVRMALGEGVEKGPEEDFAAEVAAASGQS.

An involved in Mg(2+) ion dislocation from EF-Tu region spans residues 80 to 83 (TDFV).

The protein belongs to the EF-Ts family.

It is found in the cytoplasm. Its function is as follows. Associates with the EF-Tu.GDP complex and induces the exchange of GDP to GTP. It remains bound to the aminoacyl-tRNA.EF-Tu.GTP complex up to the GTP hydrolysis stage on the ribosome. The protein is Elongation factor Ts of Maricaulis maris (strain MCS10) (Caulobacter maris).